Here is a 484-residue protein sequence, read N- to C-terminus: ATP synthase subunit beta (484 aa).

The segment at 104–123 is disordered; that stretch reads ERGPIGSKQTMPIHADAPPF. ATP is bound at residue 156–163; it reads GGAGVGKT.

It belongs to the ATPase alpha/beta chains family. F-type ATPases have 2 components, CF(1) - the catalytic core - and CF(0) - the membrane proton channel. CF(1) has five subunits: alpha(3), beta(3), gamma(1), delta(1), epsilon(1). CF(0) has three main subunits: a(1), b(2) and c(9-12). The alpha and beta chains form an alternating ring which encloses part of the gamma chain. CF(1) is attached to CF(0) by a central stalk formed by the gamma and epsilon chains, while a peripheral stalk is formed by the delta and b chains.

The protein resides in the cell inner membrane. It catalyses the reaction ATP + H2O + 4 H(+)(in) = ADP + phosphate + 5 H(+)(out). Functionally, produces ATP from ADP in the presence of a proton gradient across the membrane. The catalytic sites are hosted primarily by the beta subunits. This is ATP synthase subunit beta from Zymomonas mobilis subsp. mobilis (strain ATCC 31821 / ZM4 / CP4).